Consider the following 132-residue polypeptide: Small ribosomal subunit protein uS8 (132 aa).

It belongs to the universal ribosomal protein uS8 family. In terms of assembly, part of the 30S ribosomal subunit. Contacts proteins S5 and S12.

One of the primary rRNA binding proteins, it binds directly to 16S rRNA central domain where it helps coordinate assembly of the platform of the 30S subunit. The chain is Small ribosomal subunit protein uS8 from Borrelia hermsii (strain HS1 / DAH).